A 1175-amino-acid chain; its full sequence is DNA-directed RNA polymerase subunit beta (1175 aa).

The tract at residues 12–33 is disordered; the sequence is QSKTDRPQSSSNGSSSLNGSVP. The span at 20 to 31 shows a compositional bias: low complexity; that stretch reads SSSNGSSSLNGS.

It belongs to the RNA polymerase beta chain family. As to quaternary structure, the RNAP catalytic core consists of 2 alpha, 1 beta, 1 beta' and 1 omega subunit. When a sigma factor is associated with the core the holoenzyme is formed, which can initiate transcription.

The catalysed reaction is RNA(n) + a ribonucleoside 5'-triphosphate = RNA(n+1) + diphosphate. Its function is as follows. DNA-dependent RNA polymerase catalyzes the transcription of DNA into RNA using the four ribonucleoside triphosphates as substrates. The sequence is that of DNA-directed RNA polymerase subunit beta from Mycobacterium avium (strain 104).